Reading from the N-terminus, the 258-residue chain is UDP-2,3-diacylglucosamine hydrolase (258 aa).

Positions 15, 17, 48, 88, and 123 each coordinate Mn(2+). A substrate-binding site is contributed by 88–89; sequence NR. Residues Asp-131, Ser-169, Asn-173, Lys-176, and His-204 each contribute to the substrate site. 2 residues coordinate Mn(2+): His-204 and His-206.

The protein belongs to the LpxH family. Requires Mn(2+) as cofactor.

The protein resides in the cell inner membrane. It catalyses the reaction UDP-2-N,3-O-bis[(3R)-3-hydroxytetradecanoyl]-alpha-D-glucosamine + H2O = 2-N,3-O-bis[(3R)-3-hydroxytetradecanoyl]-alpha-D-glucosaminyl 1-phosphate + UMP + 2 H(+). Its pathway is glycolipid biosynthesis; lipid IV(A) biosynthesis; lipid IV(A) from (3R)-3-hydroxytetradecanoyl-[acyl-carrier-protein] and UDP-N-acetyl-alpha-D-glucosamine: step 4/6. Functionally, hydrolyzes the pyrophosphate bond of UDP-2,3-diacylglucosamine to yield 2,3-diacylglucosamine 1-phosphate (lipid X) and UMP by catalyzing the attack of water at the alpha-P atom. Involved in the biosynthesis of lipid A, a phosphorylated glycolipid that anchors the lipopolysaccharide to the outer membrane of the cell. The chain is UDP-2,3-diacylglucosamine hydrolase from Bordetella pertussis (strain Tohama I / ATCC BAA-589 / NCTC 13251).